The sequence spans 370 residues: Phospho-2-dehydro-3-deoxyheptonate aldolase, phenylalanine-inhibited (370 aa).

This sequence belongs to the class-I DAHP synthase family.

It catalyses the reaction D-erythrose 4-phosphate + phosphoenolpyruvate + H2O = 7-phospho-2-dehydro-3-deoxy-D-arabino-heptonate + phosphate. It participates in metabolic intermediate biosynthesis; chorismate biosynthesis; chorismate from D-erythrose 4-phosphate and phosphoenolpyruvate: step 1/7. Its activity is regulated as follows. Inhibited by phenyalanine. Its function is as follows. Stereospecific condensation of phosphoenolpyruvate (PEP) and D-erythrose-4-phosphate (E4P) giving rise to 3-deoxy-D-arabino-heptulosonate-7-phosphate (DAHP). This Saccharomyces cerevisiae (strain ATCC 204508 / S288c) (Baker's yeast) protein is Phospho-2-dehydro-3-deoxyheptonate aldolase, phenylalanine-inhibited (ARO3).